A 509-amino-acid chain; its full sequence is Maturase K (509 aa).

The protein belongs to the intron maturase 2 family. MatK subfamily.

The protein resides in the plastid. Its subcellular location is the chloroplast. Usually encoded in the trnK tRNA gene intron. Probably assists in splicing its own and other chloroplast group II introns. The chain is Maturase K from Nicotiana sylvestris (Wood tobacco).